A 501-amino-acid polypeptide reads, in one-letter code: L-arabinose isomerase (501 aa).

The Mn(2+) site is built by E306, E333, H350, and H450.

It belongs to the arabinose isomerase family. Homohexamer. Requires Mn(2+) as cofactor.

The catalysed reaction is beta-L-arabinopyranose = L-ribulose. The protein operates within carbohydrate degradation; L-arabinose degradation via L-ribulose; D-xylulose 5-phosphate from L-arabinose (bacterial route): step 1/3. In terms of biological role, catalyzes the conversion of L-arabinose to L-ribulose. The sequence is that of L-arabinose isomerase from Pectobacterium atrosepticum (strain SCRI 1043 / ATCC BAA-672) (Erwinia carotovora subsp. atroseptica).